The chain runs to 149 residues: 3-dehydroquinate dehydratase (149 aa).

The active-site Proton acceptor is the Tyr26. Substrate is bound by residues Asn77, His83, and Asp90. The Proton donor role is filled by His103. Residues 104–105 (LS) and Arg114 contribute to the substrate site.

Belongs to the type-II 3-dehydroquinase family. As to quaternary structure, homododecamer.

It catalyses the reaction 3-dehydroquinate = 3-dehydroshikimate + H2O. It functions in the pathway metabolic intermediate biosynthesis; chorismate biosynthesis; chorismate from D-erythrose 4-phosphate and phosphoenolpyruvate: step 3/7. Catalyzes a trans-dehydration via an enolate intermediate. The sequence is that of 3-dehydroquinate dehydratase from Aeromonas salmonicida (strain A449).